The primary structure comprises 491 residues: Chromosomal replication initiator protein DnaA (491 aa).

The interval 1–69 (MTTWNKCLKK…TIQEFHDGDL (69 aa)) is domain I, interacts with DnaA modulators. The segment at 69–154 (LLIEYSNKKF…KDDQEYSFGL (86 aa)) is domain II. A disordered region spans residues 106–126 (DSEETSLNQEPKKSQKKLSSK). The segment at 155 to 371 (PLKEKYVFDS…GALNRVLTTS (217 aa)) is domain III, AAA+ region. G199, G201, K202, and T203 together coordinate ATP. A domain IV, binds dsDNA region spans residues 372-491 (KFNHKDPTIE…YELLLDKISR (120 aa)).

The protein belongs to the DnaA family. In terms of assembly, oligomerizes as a right-handed, spiral filament on DNA at oriC.

Its subcellular location is the cytoplasm. Functionally, plays an essential role in the initiation and regulation of chromosomal replication. ATP-DnaA binds to the origin of replication (oriC) to initiate formation of the DNA replication initiation complex once per cell cycle. Binds the DnaA box (a 9 base pair repeat at the origin) and separates the double-stranded (ds)DNA. Forms a right-handed helical filament on oriC DNA; dsDNA binds to the exterior of the filament while single-stranded (ss)DNA is stabiized in the filament's interior. The ATP-DnaA-oriC complex binds and stabilizes one strand of the AT-rich DNA unwinding element (DUE), permitting loading of DNA polymerase. After initiation quickly degrades to an ADP-DnaA complex that is not apt for DNA replication. Binds acidic phospholipids. The chain is Chromosomal replication initiator protein DnaA from Francisella philomiragia subsp. philomiragia (strain ATCC 25017 / CCUG 19701 / FSC 153 / O#319-036).